A 1008-amino-acid chain; its full sequence is Serine/threonine-protein kinase PRP4 homolog (1008 aa).

Residues 1 to 103 (MAAAEAPSLR…PAKRTKLDDL (103 aa)) are disordered. N-acetylalanine is present on A2. S8, S20, S23, and S32 each carry phosphoserine. 2 stretches are compositionally biased toward basic residues: residues 39 to 59 (KHSRHKKKKHKHRSKHKKHKH) and 67 to 81 (RKHKHKHKHKKHKRK). Residues 82 to 91 (EVADASDKEG) show a composition bias toward basic and acidic residues. A phosphoserine mark is found at S87 and S93. K99 is modified (N6-acetyllysine; alternate). K99 participates in a covalent cross-link: Glycyl lysine isopeptide (Lys-Gly) (interchain with G-Cter in SUMO2); alternate. A Glycyl lysine isopeptide (Lys-Gly) (interchain with G-Cter in SUMO2) cross-link involves residue K111. A Glycyl lysine isopeptide (Lys-Gly) (interchain with G-Cter in SUMO2); alternate cross-link involves residue K117. A Glycyl lysine isopeptide (Lys-Gly) (interchain with G-Cter in SUMO1); alternate cross-link involves residue K117. A Phosphoserine modification is found at S131. Y140 carries the post-translational modification Phosphotyrosine. Disordered stretches follow at residues 140-536 (YESG…EDEE) and 560-584 (SNLSVPSEPSSPQSSTRSRSPSPDD). A phosphoserine mark is found at S142, S144, and S166. The segment covering 157 to 168 (GNRSSTRSSSTK) has biased composition (low complexity). Residues K170 and K177 each participate in a glycyl lysine isopeptide (Lys-Gly) (interchain with G-Cter in SUMO2) cross-link. Composition is skewed to basic residues over residues 179 to 202 (STKKRSKSRSKERTRHRSDKKKSK) and 214 to 230 (RSKSKERKKSKSPSKRS). Phosphoserine is present on residues S239, S241, S257, S277, S283, S292, and S294. Over residues 247–270 (RSQEKVGKARSPVDDKAKVEDKSK) the composition is skewed to basic and acidic residues. The segment covering 302 to 315 (SKDRRSRSKERKSK) has biased composition (basic residues). Residues 316 to 325 (RPEADKEKKP) are compositionally biased toward basic and acidic residues. A phosphoserine mark is found at S328, S354, S356, S366, and S368. Over residues 342 to 367 (PSRRPGRSPKRRSLSPKQRDKSRRSR) the composition is skewed to basic residues. Residue T385 is modified to Phosphothreonine. S387 carries the phosphoserine modification. 2 stretches are compositionally biased toward basic and acidic residues: residues 395–408 (RSLERKRREPERRR) and 415–429 (RPRDDILSRRERSKD). 3 positions are modified to phosphoserine: S427, S431, and S437. The span at 438-498 (PARRRASRSP…RGGRRRRSRS (61 aa)) shows a compositional bias: basic residues. Phosphoserine occurs at positions 519, 520, 521, 566, 570, 577, 579, and 581. Residues 519–536 (SSSDDNLEDFDVEEEDEE) are compositionally biased toward acidic residues. Residues 563-582 (SVPSEPSSPQSSTRSRSPSP) are compositionally biased toward low complexity. Glycyl lysine isopeptide (Lys-Gly) (interchain with G-Cter in SUMO2) cross-links involve residues K594 and K660. One can recognise a Protein kinase domain in the interval 688–1004 (YNVYGYTGQG…INQALQHAFI (317 aa)). ATP-binding positions include 694–702 (TGQGVFSNV) and K718. N6-acetyllysine is present on K718. Catalysis depends on D816, which acts as the Proton acceptor. Phosphotyrosine is present on Y850. S853 bears the Phosphoserine mark.

The protein belongs to the protein kinase superfamily. CMGC Ser/Thr protein kinase family. In terms of assembly, interacts with CLK1 C-terminus. Associates with the U5 snRNP and NCOR1 deacetylase complexes. Identified in the spliceosome C complex. In terms of processing, phosphorylated by CLK1. Autophosphorylated; phosphorylation inhibits interaction with its targets, such as PRPF6 or SMARCA4.

It is found in the nucleus. The protein localises to the chromosome. The protein resides in the centromere. Its subcellular location is the kinetochore. It catalyses the reaction L-seryl-[protein] + ATP = O-phospho-L-seryl-[protein] + ADP + H(+). It carries out the reaction L-threonyl-[protein] + ATP = O-phospho-L-threonyl-[protein] + ADP + H(+). Its function is as follows. Serine/threonine kinase involved in spliceosomal assembly as well as mitosis and signaling regulation. Connects chromatin mediated regulation of transcription and pre-mRNA splicing. During spliceosomal assembly, interacts with and phosphorylates PRPF6 and PRPF31, components of the U4/U6-U5 tri-small nuclear ribonucleoprotein (snRNP), to facilitate the formation of the spliceosome B complex. Plays a role in regulating transcription and the spindle assembly checkpoint (SAC). Associates with U5 snRNP and NCOR1 deacetylase complexes which may allow a coordination of pre-mRNA splicing with chromatin remodeling events involved in transcriptional regulation. Associates and probably phosphorylates SMARCA4 and NCOR1. Phosphorylates SRSF1. Associates with kinetochores during mitosis and is necessary for recruitment and maintenance of the checkpoint proteins such as MAD1L1 and MAD12L1 at the kinetochores. Phosphorylates and regulates the activity of the transcription factors such as ELK1 and KLF13. Phosphorylates nuclear YAP1 and WWTR1/TAZ which induces nuclear exclusion and regulates Hippo signaling pathway, involved in tissue growth control. This is Serine/threonine-protein kinase PRP4 homolog (PRP4K) from Bos taurus (Bovine).